The chain runs to 247 residues: Adenosylcobinamide-GDP ribazoletransferase (247 aa).

Helical transmembrane passes span 34-54, 59-79, 113-133, 138-158, 171-193, and 194-214; these read IVTFPLIGMLLGAIGGLVFVA, CGIPLAALFCVLTLALLTGGF, GGLALIFVLLAKVLVISELAL, MLAALAMACAAGRGVAVLLMY, VFIGKVTGRQTCVTLGLTAILAA, and ILMPGMHGVAALVVTLAAIFI.

This sequence belongs to the CobS family. The cofactor is Mg(2+).

The protein resides in the cell inner membrane. It catalyses the reaction alpha-ribazole + adenosylcob(III)inamide-GDP = adenosylcob(III)alamin + GMP + H(+). The enzyme catalyses alpha-ribazole 5'-phosphate + adenosylcob(III)inamide-GDP = adenosylcob(III)alamin 5'-phosphate + GMP + H(+). The protein operates within cofactor biosynthesis; adenosylcobalamin biosynthesis; adenosylcobalamin from cob(II)yrinate a,c-diamide: step 7/7. Its function is as follows. Joins adenosylcobinamide-GDP and alpha-ribazole to generate adenosylcobalamin (Ado-cobalamin). Also synthesizes adenosylcobalamin 5'-phosphate from adenosylcobinamide-GDP and alpha-ribazole 5'-phosphate. In Citrobacter koseri (strain ATCC BAA-895 / CDC 4225-83 / SGSC4696), this protein is Adenosylcobinamide-GDP ribazoletransferase.